We begin with the raw amino-acid sequence, 577 residues long: Double-stranded RNA-binding protein Staufen homolog 1 (577 aa).

The residue at position 2 (S2) is an N-acetylserine. Residues S34–S44 are compositionally biased toward polar residues. The disordered stretch occupies residues S34–A55. One can recognise a DRBM 1 domain in the interval T72 to N162. An Asymmetric dimethylarginine modification is found at R108. R115 is subject to Asymmetric dimethylarginine; alternate. Residue R115 is modified to Omega-N-methylarginine; alternate. S176 carries the phosphoserine modification. The 68-residue stretch at S184–K251 folds into the DRBM 2 domain. Position 278 is a phosphoserine (S278). Residues N286–F354 enclose the DRBM 3 domain. Residues Q360 to S397 are disordered. Positions L366–T384 are enriched in basic and acidic residues. Residue S390 is modified to Phosphoserine.

As to quaternary structure, binds tubulin. Binds with low affinity single-stranded RNA or DNA homopolymers. Interacts with CASC3 in an RNA-dependent manner. Identified in a mRNP complex, at least composed of DHX9, DDX3X, ELAVL1, HNRNPU, IGF2BP1, ILF3, PABPC1, PCBP2, PTBP2, STAU1, STAU2, SYNCRIP and YBX1. (Microbial infection) Interacts with HERV-K rec and gag proteins. In terms of assembly, (Microbial infection) Interacts with HIV-1 GAG polyprotein. As to quaternary structure, (Microbial infection) Interacts with influenza virus NS1 protein. (Microbial infection) Interacts with Ebola virus NP, VP30 and VP35. In terms of tissue distribution, widely expressed. Expressed in brain, pancreas, heart, skeletal muscles, liver, lung, kidney and placenta.

It localises to the cytoplasm. It is found in the rough endoplasmic reticulum. Functionally, binds double-stranded RNA (regardless of the sequence) and tubulin. May play a role in specific positioning of mRNAs at given sites in the cell by cross-linking cytoskeletal and RNA components, and in stimulating their translation at the site. Its function is as follows. (Microbial infection) Plays a role in virus particles production of many viruses including of HIV-1, HERV-K, ebola virus and influenza virus. Acts by interacting with various viral proteins involved in particle budding process. This Homo sapiens (Human) protein is Double-stranded RNA-binding protein Staufen homolog 1 (STAU1).